The chain runs to 312 residues: Ribosomal RNA small subunit methyltransferase H (312 aa).

S-adenosyl-L-methionine is bound by residues 36 to 38 (GGH), aspartate 55, phenylalanine 81, aspartate 103, and glutamine 110.

Belongs to the methyltransferase superfamily. RsmH family.

It is found in the cytoplasm. It catalyses the reaction cytidine(1402) in 16S rRNA + S-adenosyl-L-methionine = N(4)-methylcytidine(1402) in 16S rRNA + S-adenosyl-L-homocysteine + H(+). In terms of biological role, specifically methylates the N4 position of cytidine in position 1402 (C1402) of 16S rRNA. The polypeptide is Ribosomal RNA small subunit methyltransferase H (Marinomonas sp. (strain MWYL1)).